The chain runs to 247 residues: Mycofactocin precursor peptide peptidase (247 aa).

5 residues coordinate a divalent metal cation: Glu38, His40, Asp49, His124, and Glu163.

Belongs to the creatininase superfamily. In terms of assembly, homooctamer. It depends on Fe(2+) as a cofactor. Zn(2+) is required as a cofactor.

It catalyses the reaction [mycofactocin precursor peptide]-C-terminal glycyl-N-{5-[(4-hydroxyphenyl)methyl]-4,4-dimethyl-2-oxopyrrolidin-3-yl}acetamide + H2O = [mycofactocin precursor peptide]-C-terminal glycine + 3-amino-5-[(4-hydroxyphenyl)methyl]-4,4-dimethyl-2-pyrrolidin-2-one. In terms of biological role, peptidase involved in the biosynthesis of the enzyme cofactor mycofactocin (MFT). Catalyzes cleavage of the MftC-modified MftA peptide to liberate its final two residues, which consist of a cross-linked valine-decarboxylated tyrosine dipeptide (named 3-amino-5-[(4-hydroxyphenyl)methyl]-4,4-dimethyl-2-pyrrolidin-2-one or ADHP). Is required for the in vivo ethanol assimilation in M.smegmatis. In Mycolicibacterium smegmatis (strain ATCC 700084 / mc(2)155) (Mycobacterium smegmatis), this protein is Mycofactocin precursor peptide peptidase.